Reading from the N-terminus, the 400-residue chain is Endoglucanase A (400 aa).

Residues 1 to 32 (MTKTFKKFSIAGLALLFMATAAFAGWSTKASA) form the signal peptide. The active-site Proton donor is Glu-187. Glu-328 (nucleophile) is an active-site residue.

This sequence belongs to the glycosyl hydrolase 5 (cellulase A) family.

Its subcellular location is the secreted. The catalysed reaction is Endohydrolysis of (1-&gt;4)-beta-D-glucosidic linkages in cellulose, lichenin and cereal beta-D-glucans.. With respect to regulation, strongly inhibited by Hg(2+), Ag(+) and Fe(3+). To a lesser extent, is also inhibited by Pb(2+), Mn(2+), Sn(2+) and Cu(2+). By contrast, Ni(2+), Zn(2+), Co(2+), Ba(2+) and NH(4)(+) do not affect enzyme activity, while 10 mM Ca(2+), and Mg(2+) produce a stimulating effect. Is also strongly inhibited by chemicals such as N-bromosuccinimide and dimethyl(2-dihydroxy-5-nitrobenzyl)sulphonium bromide. Is not affected by N-acetylimidazole. In terms of biological role, endoglucanase with high activity on carboxymethylcellulose (CMC) and lichenan, but not active on Avicel. The sequence is that of Endoglucanase A (celA) from Paenibacillus barcinonensis.